The chain runs to 342 residues: Voltage-gated hydrogen channel 1 (342 aa).

Disordered regions lie at residues 1-20 (MEGD…INPN) and 74-102 (FNDN…SEQK). The Cytoplasmic segment spans residues 1 to 148 (MEGDNCNKSR…KLRHILHSKP (148 aa)). Positions 86–102 (QEQSTQNTMISMQSEQK) are enriched in polar residues. Residues 149–169 (IHVAIIVLVVLDSFLVVGELL) form a helical membrane-spanning segment. The Extracellular portion of the chain corresponds to 170 to 185 (IDLKVIIVPHGNPAPE). A helical transmembrane segment spans residues 186 to 208 (ILHGFSLSILSIFMVEIALKIIA). The Cytoplasmic portion of the chain corresponds to 209–217 (DHRHFIHHK). A helical membrane pass occupies residues 218–238 (VEVLDAVVVVISFGVDIALIF). Topologically, residues 239–247 (VGESEALAA) are extracellular. The chain crosses the membrane as a helical span at residues 248–268 (IGLLVILRLWRVFRIINGIIV). Topologically, residues 269 to 342 (TVKTKADDRV…HSTTTASADV (74 aa)) are cytoplasmic. Positions 271–315 (KTKADDRVHEIKKKNSELELQIHNLEEKLSQKEQDMSRLHEILRC) form a coiled coil.

This sequence belongs to the hydrogen channel family. Homodimer.

The protein localises to the membrane. It is found in the cell membrane. With respect to regulation, less sensitive to zinc ions as compared to the mammalian homologs. Functionally, mediates the voltage-dependent proton permeability of excitable membranes. Forms a proton-selective channel through which protons may pass in accordance with their electrochemical gradient. In Ciona intestinalis (Transparent sea squirt), this protein is Voltage-gated hydrogen channel 1 (HVCN1).